Consider the following 1159-residue polypeptide: WASH complex subunit 5 (1159 aa).

A Phosphoserine modification is found at Ser917.

Belongs to the strumpellin family. As to quaternary structure, component of the WASH core complex also described as WASH regulatory complex (SHRC) composed of WASH (WASHC1, WASH2P or WASH3P), WASHC2 (WASHC2A or WASHC2C), WASHC3, WASHC4 and WASHC5. The WASH core complex associates via WASHC2 with the F-actin-capping protein dimer (formed by CAPZA1, CAPZA2 or CAPZA3 and CAPZB) in a transient or substoichiometric manner which was initially described as WASH complex. Interacts with VCP, PI4K2A.

Its subcellular location is the cytoplasm. It is found in the cytosol. It localises to the endoplasmic reticulum. The protein resides in the early endosome. Functionally, acts as a component of the WASH core complex that functions as a nucleation-promoting factor (NPF) at the surface of endosomes, where it recruits and activates the Arp2/3 complex to induce actin polymerization, playing a key role in the fission of tubules that serve as transport intermediates during endosome sorting. May be involved in axonal outgrowth. Involved in cellular localization of ADRB2. Involved in cellular trafficking of BLOC-1 complex cargos such as ATP7A and VAMP7. This chain is WASH complex subunit 5, found in Pongo abelii (Sumatran orangutan).